Consider the following 162-residue polypeptide: Caveolin-2 (162 aa).

At 1 to 86 the chain is on the cytoplasmic side; it reads MGLETEKADV…FEISKYVLYK (86 aa). Residue tyrosine 19 is modified to Phosphotyrosine; by SRC. Phosphoserine is present on residues serine 20 and serine 23. A Phosphotyrosine; by SRC modification is found at tyrosine 27. Serine 36 carries the phosphoserine modification. The helical intramembrane region spans 87 to 107; the sequence is FLTVFLAIPLAFVAGILFATL. Residues 108–162 lie on the Cytoplasmic side of the membrane; the sequence is SCLHIWIIMPFVKTCLMVLPSVQTIWKSVTDVIIAPLCTSVGRSFSSISLRLSQD.

It belongs to the caveolin family. In terms of assembly, monomer or homodimer. Interacts with CAV1; the interaction forms a stable heterooligomeric complex that is required for targeting to lipid rafts and for caveolae formation. Tyrosine phosphorylated forms do not form heterooligomers with the Tyr-19-phosphorylated form existing as a monomer or dimer, and the Tyr-27-form as a monomer only. Interacts (tyrosine phosphorylated form) with the SH2 domain-containing proteins, RASA1, NCK1 and SRC. Interacts (tyrosine phosphorylated form) with INSR, the interaction (Tyr-27-phosphorylated form) is increased on insulin stimulation. Interacts (Tyr-19 phosphorylated form) with MAPK1 (phosphorylated form); the interaction, promoted by insulin, leads to nuclear location and MAPK1 activation. Interacts with STAT3; the interaction is increased on insulin-induced tyrosine phosphorylation leading to STAT activation. Phosphorylated on serine and tyrosine residues. CAV1 promotes phosphorylation on Ser-23 which then targets the complex to the plasma membrane, lipid rafts and caveolae. Phosphorylation on Ser-36 appears to modulate mitosis in endothelial cells. Phosphorylation on both Tyr-19 and Tyr-27 is required for insulin-induced 'Ser-727' phosphorylation of STAT3 and its activation. Phosphorylation on Tyr-19 is required for insulin-induced phosphorylation of MAPK1 and DNA binding of STAT3. Tyrosine phosphorylation is induced by both EGF and insulin (By. similarity).

The protein resides in the nucleus. It localises to the cytoplasm. Its subcellular location is the golgi apparatus membrane. The protein localises to the cell membrane. It is found in the membrane. The protein resides in the caveola. May act as a scaffolding protein within caveolar membranes. Interacts directly with G-protein alpha subunits and can functionally regulate their activity. Acts as an accessory protein in conjunction with CAV1 in targeting to lipid rafts and driving caveolae formation. The Ser-36 phosphorylated form has a role in modulating mitosis in endothelial cells. Positive regulator of cellular mitogenesis of the MAPK signaling pathway. Required for the insulin-stimulated nuclear translocation and activation of MAPK1 and STAT3, and the subsequent regulation of cell cycle progression. In Otolemur garnettii (Small-eared galago), this protein is Caveolin-2 (CAV2).